The following is a 309-amino-acid chain: Thermolabile glutaminase (309 aa).

Ser-64, Asn-114, Glu-160, Asn-167, Tyr-191, Tyr-243, and Val-261 together coordinate substrate.

This sequence belongs to the glutaminase family. In terms of assembly, homotetramer.

The enzyme catalyses L-glutamine + H2O = L-glutamate + NH4(+). The polypeptide is Thermolabile glutaminase (glsA) (Rhizobium etli (strain ATCC 51251 / DSM 11541 / JCM 21823 / NBRC 15573 / CFN 42)).